A 521-amino-acid polypeptide reads, in one-letter code: Glucose-1-phosphate adenylyltransferase large subunit 2, chloroplastic/amyloplastic (521 aa).

The transit peptide at 1–47 (MQFSSVLPLEGKACMSPVRRGSGGYGSERMRINCCSIRRNKALRRMC) directs the protein to the chloroplast.

Belongs to the bacterial/plant glucose-1-phosphate adenylyltransferase family. As to quaternary structure, heterotetramer. As to expression, abundant in the embryo and is also present in the endosperm.

Its subcellular location is the plastid. It is found in the chloroplast. The protein localises to the amyloplast. It catalyses the reaction alpha-D-glucose 1-phosphate + ATP + H(+) = ADP-alpha-D-glucose + diphosphate. It participates in glycan biosynthesis; starch biosynthesis. With respect to regulation, activated by 3'phosphoglycerate, inhibited by orthophosphate. Allosteric regulation. In terms of biological role, this protein plays a role in synthesis of starch. It catalyzes the synthesis of the activated glycosyl donor, ADP-glucose from Glc-1-P and ATP. This Zea mays (Maize) protein is Glucose-1-phosphate adenylyltransferase large subunit 2, chloroplastic/amyloplastic (AGP2).